The chain runs to 159 residues: Ribosomal RNA large subunit methyltransferase H (159 aa).

Residues isoleucine 75, glycine 108, and 127-132 (FGRMTL) contribute to the S-adenosyl-L-methionine site.

Belongs to the RNA methyltransferase RlmH family. In terms of assembly, homodimer.

Its subcellular location is the cytoplasm. The catalysed reaction is pseudouridine(1915) in 23S rRNA + S-adenosyl-L-methionine = N(3)-methylpseudouridine(1915) in 23S rRNA + S-adenosyl-L-homocysteine + H(+). Its function is as follows. Specifically methylates the pseudouridine at position 1915 (m3Psi1915) in 23S rRNA. This Lactococcus lactis subsp. lactis (strain IL1403) (Streptococcus lactis) protein is Ribosomal RNA large subunit methyltransferase H.